Here is a 343-residue protein sequence, read N- to C-terminus: Aspartate carbamoyltransferase catalytic subunit (343 aa).

The carbamoyl phosphate site is built by R54 and T55. K82 is a binding site for L-aspartate. Positions 104, 134, and 137 each coordinate carbamoyl phosphate. L-aspartate contacts are provided by R177 and R232. Carbamoyl phosphate contacts are provided by G277 and P278. The segment at 323–343 is disordered; the sequence is PDQSNPQRNVTNTSNWQETKR.

This sequence belongs to the aspartate/ornithine carbamoyltransferase superfamily. ATCase family. Heterododecamer (2C3:3R2) of six catalytic PyrB chains organized as two trimers (C3), and six regulatory PyrI chains organized as three dimers (R2).

The enzyme catalyses carbamoyl phosphate + L-aspartate = N-carbamoyl-L-aspartate + phosphate + H(+). The protein operates within pyrimidine metabolism; UMP biosynthesis via de novo pathway; (S)-dihydroorotate from bicarbonate: step 2/3. Its function is as follows. Catalyzes the condensation of carbamoyl phosphate and aspartate to form carbamoyl aspartate and inorganic phosphate, the committed step in the de novo pyrimidine nucleotide biosynthesis pathway. The polypeptide is Aspartate carbamoyltransferase catalytic subunit (Renibacterium salmoninarum (strain ATCC 33209 / DSM 20767 / JCM 11484 / NBRC 15589 / NCIMB 2235)).